The sequence spans 122 residues: Large ribosomal subunit protein uL14 (122 aa).

It belongs to the universal ribosomal protein uL14 family. As to quaternary structure, part of the 50S ribosomal subunit. Forms a cluster with proteins L3 and L19. In the 70S ribosome, L14 and L19 interact and together make contacts with the 16S rRNA in bridges B5 and B8.

In terms of biological role, binds to 23S rRNA. Forms part of two intersubunit bridges in the 70S ribosome. This Shewanella sp. (strain ANA-3) protein is Large ribosomal subunit protein uL14.